The primary structure comprises 464 residues: Fumarate hydratase class II (464 aa).

Substrate contacts are provided by residues 98 to 100 (SGT), 129 to 132 (HPND), 139 to 141 (SSN), and T187. H188 acts as the Proton donor/acceptor in catalysis. The active site involves S318. Residues S319 and 324–326 (KVN) each bind substrate.

Belongs to the class-II fumarase/aspartase family. Fumarase subfamily. In terms of assembly, homotetramer.

It is found in the cytoplasm. The enzyme catalyses (S)-malate = fumarate + H2O. The protein operates within carbohydrate metabolism; tricarboxylic acid cycle; (S)-malate from fumarate: step 1/1. Functionally, involved in the TCA cycle. Catalyzes the stereospecific interconversion of fumarate to L-malate. The polypeptide is Fumarate hydratase class II (Pasteurella multocida (strain Pm70)).